Here is a 78-residue protein sequence, read N- to C-terminus: UPF0235 protein AF_2072 (78 aa).

The protein belongs to the UPF0235 family.

This is UPF0235 protein AF_2072 from Archaeoglobus fulgidus (strain ATCC 49558 / DSM 4304 / JCM 9628 / NBRC 100126 / VC-16).